We begin with the raw amino-acid sequence, 359 residues long: MMKQIQVDLGERSYPIYIGQNLMNDSEALSRYLFKKRILIVTNETVAPLYLNQIQEVMVSFGEVESVILPDGEQFKDLTHLDAIFTALLQRNYGRDSVLVALGGGVIGDMTGFAAACYQRGIDFIQIPTTLLSQVDSSVGGKTAVNHPLGKNMIGAFYQPQLVLIDTQCLHTLPAREFAAGMAEVIKYGIMWDGEFFQWLENNVQALKRLETEALVYAISRCCEIKADVVSQDETEQGVRALLNLGHTFGHAIEAEMGYGNWLHGEAVAAGTVLAAQTARSLGLIDESIVCRIVQLLQAFDLPVSAPESMDFDSFIQHMRRDKKVLGGQIRLVLPTGIGQADVFSQVTESTLEQVICCA.

NAD(+) is bound by residues 71-76 (DGEQFK), 105-109 (GVIGD), 129-130 (TT), Lys142, Lys151, and 169-172 (CLHT). Positions 184, 247, and 264 each coordinate Zn(2+).

It belongs to the sugar phosphate cyclases superfamily. Dehydroquinate synthase family. Co(2+) serves as cofactor. Requires Zn(2+) as cofactor. It depends on NAD(+) as a cofactor.

Its subcellular location is the cytoplasm. It carries out the reaction 7-phospho-2-dehydro-3-deoxy-D-arabino-heptonate = 3-dehydroquinate + phosphate. It participates in metabolic intermediate biosynthesis; chorismate biosynthesis; chorismate from D-erythrose 4-phosphate and phosphoenolpyruvate: step 2/7. In terms of biological role, catalyzes the conversion of 3-deoxy-D-arabino-heptulosonate 7-phosphate (DAHP) to dehydroquinate (DHQ). In Shewanella putrefaciens (strain CN-32 / ATCC BAA-453), this protein is 3-dehydroquinate synthase.